Here is a 185-residue protein sequence, read N- to C-terminus: uncharacterized protein (185 aa).

At 1–69 the chain is on the cytoplasmic side; the sequence is MSSFIDSIKS…SSDCSRAERT (69 aa). A helical membrane pass occupies residues 70 to 90; that stretch reads FNLILFAIVDLVICCESMAFF. Asparagine 91 is a topological domain (extracellular). Residues 92–112 traverse the membrane as a helical segment; sequence LLLKLPSMLLVSFLTMLVFSI. At 113–118 the chain is on the cytoplasmic side; the sequence is SYSWSA. A helical membrane pass occupies residues 119-139; that stretch reads FNWISFAFSSASFLMKACILF. Over 140–185 the chain is Extracellular; it reads NSSFTWFGVKAVIAEDMLYRMVRGLFCASFVKQLQTTFLATAIVLC.

The protein resides in the membrane. This is an uncharacterized protein from Saccharomyces cerevisiae (strain ATCC 204508 / S288c) (Baker's yeast).